Reading from the N-terminus, the 1139-residue chain is Protein kinase C-like (1139 aa).

Residues 1 to 67 (MNEDEAIQNI…LRDIQLRKVG (67 aa)) form the REM-1 1 domain. Positions 72 to 132 (GMSLGADDAG…PGPGAASKAR (61 aa)) are disordered. The region spanning 142 to 219 (KYDTPYLGPR…LKRYEELHVD (78 aa)) is the REM-1 2 domain. The 119-residue stretch at 225 to 343 (AQDDDSINTP…MRRKRIEAEM (119 aa)) folds into the C2 domain. The tract at residues 349–404 (VSADRMGSTGAPSQFPMSPTSGSFGGSPQAPGGGQGQAPGPFGDPAPQPQVVTGPI) is disordered. Polar residues predominate over residues 358–368 (GAPSQFPMSPT). 2 Phorbol-ester/DAG-type zinc fingers span residues 454 to 502 (GHKF…VTKC) and 522 to 572 (PHRF…PDFC). Disordered stretches follow at residues 590–637 (KQRQ…TPSA), 649–668 (QTSP…LSAA), and 679–804 (QGRT…TDPG). The segment covering 594-614 (QKTTSLSEKTLRSGATKSPTT) has biased composition (polar residues). The span at 615–629 (AGHGSSASFSSAGAG) shows a compositional bias: low complexity. Composition is skewed to pro residues over residues 723–734 (AQPPAQQRPPQP) and 743–760 (AQMP…PPQP). Over residues 761 to 793 (GQQYQQQQPAAQKPQPQPPATAQGAAAGPPGSQ) the composition is skewed to low complexity. One can recognise a Protein kinase domain in the interval 814–1073 (FNFLAVLGKG…AQEVMSQPFF (260 aa)). ATP contacts are provided by residues 820–828 (LGKGNFGKV) and Lys-843. The Proton acceptor role is filled by Asp-939. The AGC-kinase C-terminal domain maps to 1074-1139 (RNINWDDIYH…RGFSYTADLD (66 aa)).

This sequence belongs to the protein kinase superfamily. AGC Ser/Thr protein kinase family. PKC subfamily.

It catalyses the reaction L-seryl-[protein] + ATP = O-phospho-L-seryl-[protein] + ADP + H(+). The catalysed reaction is L-threonyl-[protein] + ATP = O-phospho-L-threonyl-[protein] + ADP + H(+). Stimulated about twofold by phospholipids or phorbol esters. This Hypocrea jecorina (Trichoderma reesei) protein is Protein kinase C-like (pkc1).